Consider the following 217-residue polypeptide: Ribonuclease HII (217 aa).

The RNase H type-2 domain occupies 16–217; the sequence is YCIAGVDEVG…VARVLGTYHD (202 aa). 3 residues coordinate a divalent metal cation: aspartate 22, glutamate 23, and aspartate 114.

The protein belongs to the RNase HII family. Mn(2+) is required as a cofactor. The cofactor is Mg(2+).

The protein localises to the cytoplasm. The catalysed reaction is Endonucleolytic cleavage to 5'-phosphomonoester.. In terms of biological role, endonuclease that specifically degrades the RNA of RNA-DNA hybrids. The chain is Ribonuclease HII from Colwellia psychrerythraea (strain 34H / ATCC BAA-681) (Vibrio psychroerythus).